A 575-amino-acid chain; its full sequence is MGRTLAVPTPYGCIGCKLPQPDYPPALIVFMFCAMVITIVVDLIGNSMVILAVSKNKKLRNSGNVFVVSLSVADMLVAIYPYPLMLHAMAIGGWDLSKLQCQMVGFITGLSVVGSIFNIMAIAINRYCYICHSLQYERIFSVRNTCIYLAVTWIMTVLAVLPNMYIGTIEYDPRTYTCIFNYVNNPAFAVTIVCIHFVLPLLIVGFCYVKIWTKVLAARDPAGQNPDNQLAEVRNFLTMFVIFLLFAVCWCPINALTVLVAVNPKEMAGKIPNWVYLAAYFIAYFNSCLNAVIYGVLNENFRREYWTIFHAMRHPVLFLSGLLTDVREMQEAQAHTHARARARTQAHEQDHAHACPAVEEIPMSVRNVPLPGHGAAGQPECVSGHPKPASGHSRSVSARRKSASAHPKSASGQSKSATVYPKPTSVHFKPSSVYFKADSVYFKPSSSHPKPITGPSKTAISPATSFPKPTTGYTQHATIHSEPTTLDYLEPITTSHSKPVIASHSELAASCHLECNIFDLSDPTSSPASDSSNSAASLLDPTAAAAATVNPTVVTTDYHEIVLIDVDADSDEMAV.

The Extracellular segment spans residues 1–30; sequence MGRTLAVPTPYGCIGCKLPQPDYPPALIVF. The chain crosses the membrane as a helical span at residues 31 to 51; sequence MFCAMVITIVVDLIGNSMVIL. The Cytoplasmic portion of the chain corresponds to 52–64; the sequence is AVSKNKKLRNSGN. Residues 65–85 form a helical membrane-spanning segment; it reads VFVVSLSVADMLVAIYPYPLM. The Extracellular segment spans residues 86 to 103; sequence LHAMAIGGWDLSKLQCQM. A disulfide bond links cysteine 101 and cysteine 178. A helical transmembrane segment spans residues 104–124; the sequence is VGFITGLSVVGSIFNIMAIAI. The Cytoplasmic portion of the chain corresponds to 125 to 143; that stretch reads NRYCYICHSLQYERIFSVR. A helical transmembrane segment spans residues 144 to 164; sequence NTCIYLAVTWIMTVLAVLPNM. Residues 165-188 are Extracellular-facing; it reads YIGTIEYDPRTYTCIFNYVNNPAF. Residues 189 to 209 traverse the membrane as a helical segment; it reads AVTIVCIHFVLPLLIVGFCYV. Topologically, residues 210-239 are cytoplasmic; sequence KIWTKVLAARDPAGQNPDNQLAEVRNFLTM. Residues 240 to 260 traverse the membrane as a helical segment; sequence FVIFLLFAVCWCPINALTVLV. The Extracellular segment spans residues 261 to 273; that stretch reads AVNPKEMAGKIPN. Residues 274 to 294 form a helical membrane-spanning segment; sequence WVYLAAYFIAYFNSCLNAVIY. At 295–575 the chain is on the cytoplasmic side; it reads GVLNENFRRE…VDADSDEMAV (281 aa). Disordered stretches follow at residues 368–421 and 446–474; these read VPLP…TVYP and SSHP…TGYT. Residues 455–474 are compositionally biased toward polar residues; that stretch reads PSKTAISPATSFPKPTTGYT.

It belongs to the G-protein coupled receptor 1 family. Homodimer, and heterodimer with MTNR1A and MTNR1B. Interacts with KAT5. Interacts with RTN4 isoform A/NOGO-A. Interacts with TGFBR1.

The protein resides in the cell membrane. Its function is as follows. G protein-coupled receptor that plays a role in numerous physiological processes including regulation of energy metabolism, neurite outgrowth or cell migration. Promotes self-renewal and neuronal differentiation of neural progenitor cells through activation of the NOTCH and WNT/beta-catenin signaling pathways. Modulates the KAT5-dependent glucocorticoid receptor signaling by modulating KAT5 subcellular compartmentalisation. Also plays a role in the activation TGFBR1 in the absence of TGFBR2 by interfering with FKBP1A binding to TGFBR1, leading to induction of both canonical and non-canonical SMAD signaling pathways resulting in inhibition of proliferation or promotion of migration. In Ovis aries (Sheep), this protein is Melatonin-related receptor (GPR50).